Reading from the N-terminus, the 551-residue chain is Membrane protein insertase YidC (551 aa).

A helical membrane pass occupies residues Ala3–Gly23. The segment covering Pro30–Gln43 has biased composition (low complexity). The segment at Pro30–Ser61 is disordered. Over residues Asp44 to Ser61 the composition is skewed to polar residues. 3 consecutive transmembrane segments (helical) span residues Leu361–Tyr381, Leu431–Leu451, and Ile504–Val524.

Belongs to the OXA1/ALB3/YidC family. Type 1 subfamily. As to quaternary structure, interacts with the Sec translocase complex via SecD. Specifically interacts with transmembrane segments of nascent integral membrane proteins during membrane integration.

The protein localises to the cell inner membrane. In terms of biological role, required for the insertion and/or proper folding and/or complex formation of integral membrane proteins into the membrane. Involved in integration of membrane proteins that insert both dependently and independently of the Sec translocase complex, as well as at least some lipoproteins. Aids folding of multispanning membrane proteins. In Francisella philomiragia subsp. philomiragia (strain ATCC 25017 / CCUG 19701 / FSC 153 / O#319-036), this protein is Membrane protein insertase YidC.